Consider the following 312-residue polypeptide: HPr kinase/phosphorylase (312 aa).

Active-site residues include histidine 141 and lysine 162. ATP is bound at residue 156-163; sequence GDSGIGKS. Residue serine 163 coordinates Mg(2+). The active-site Proton acceptor; for phosphorylation activity. Proton donor; for dephosphorylation activity is aspartate 180. An important for the catalytic mechanism of both phosphorylation and dephosphorylation region spans residues 204–213; that stretch reads LEIRGVGIID. Residue glutamate 205 participates in Mg(2+) binding. The active site involves arginine 246. The interval 267-272 is important for the catalytic mechanism of dephosphorylation; sequence PVRVGR.

The protein belongs to the HPrK/P family. In terms of assembly, homohexamer. Mg(2+) is required as a cofactor.

The enzyme catalyses [HPr protein]-L-serine + ATP = [HPr protein]-O-phospho-L-serine + ADP + H(+). It catalyses the reaction [HPr protein]-O-phospho-L-serine + phosphate + H(+) = [HPr protein]-L-serine + diphosphate. Functionally, catalyzes the ATP- as well as the pyrophosphate-dependent phosphorylation of a specific serine residue in HPr, a phosphocarrier protein of the phosphoenolpyruvate-dependent sugar phosphotransferase system (PTS). HprK/P also catalyzes the pyrophosphate-producing, inorganic phosphate-dependent dephosphorylation (phosphorolysis) of seryl-phosphorylated HPr (P-Ser-HPr). The two antagonistic activities of HprK/P are regulated by several intracellular metabolites, which change their concentration in response to the absence or presence of rapidly metabolisable carbon sources (glucose, fructose, etc.) in the growth medium. Therefore, by controlling the phosphorylation state of HPr, HPrK/P is a sensor enzyme that plays a major role in the regulation of carbon metabolism and sugar transport: it mediates carbon catabolite repression (CCR), and regulates PTS-catalyzed carbohydrate uptake and inducer exclusion. The sequence is that of HPr kinase/phosphorylase from Pediococcus pentosaceus (strain ATCC 25745 / CCUG 21536 / LMG 10740 / 183-1w).